The sequence spans 314 residues: Bifunctional pinoresinol-lariciresinol reductase (314 aa).

NADP(+) contacts are provided by residues 10–16 (GGTGYIG), R35, and K44. K138 serves as the catalytic Proton acceptor. An NADP(+)-binding site is contributed by R142. H270 lines the substrate pocket.

This sequence belongs to the NmrA-type oxidoreductase family. Isoflavone reductase subfamily. In terms of assembly, dimer.

The catalysed reaction is (+)-lariciresinol + NADP(+) = (+)-pinoresinol + NADPH + H(+). The enzyme catalyses (+)-secoisolariciresinol + NADP(+) = (-)-lariciresinol + NADPH + H(+). In terms of biological role, reductase involved in the lignan justicidin B biosynthesis. Catalyzes the enantioselective conversion of (+)-pinoresinol into (+)-lariciresinol and of (-)-lariciresinol into (+)-secoisolariciresinol. Low activity with the other enantiomers. Abstracts the 4R-hydride from the NADPH cofactor during catalysis. The sequence is that of Bifunctional pinoresinol-lariciresinol reductase (PLR_Lp1) from Linum perenne (Perennial flax).